A 169-amino-acid polypeptide reads, in one-letter code: Putative tRNA (cytidine(34)-2'-O)-methyltransferase (169 aa).

The S-adenosyl-L-methionine site is built by Ile-79, Gly-104, Ile-125, and Ser-133.

This sequence belongs to the class IV-like SAM-binding methyltransferase superfamily. RNA methyltransferase TrmH family. TrmL subfamily.

Its subcellular location is the cytoplasm. It carries out the reaction cytidine(34) in tRNA + S-adenosyl-L-methionine = 2'-O-methylcytidine(34) in tRNA + S-adenosyl-L-homocysteine + H(+). It catalyses the reaction 5-carboxymethylaminomethyluridine(34) in tRNA(Leu) + S-adenosyl-L-methionine = 5-carboxymethylaminomethyl-2'-O-methyluridine(34) in tRNA(Leu) + S-adenosyl-L-homocysteine + H(+). Could methylate the ribose at the nucleotide 34 wobble position in tRNA. This chain is Putative tRNA (cytidine(34)-2'-O)-methyltransferase, found in Listeria monocytogenes serotype 4b (strain F2365).